The following is a 182-amino-acid chain: Putative manganese efflux pump MntP (182 aa).

6 helical membrane passes run 7-27 (IISI…VSLG), 38-58 (IAYI…AGML), 71-91 (TSFA…FSAF), 106-126 (LWII…GLGI), 131-151 (IFVT…LGML), and 159-179 (FLGV…GIFI).

This sequence belongs to the MntP (TC 9.B.29) family.

It is found in the cell membrane. Its function is as follows. Probably functions as a manganese efflux pump. The sequence is that of Putative manganese efflux pump MntP from Oceanobacillus iheyensis (strain DSM 14371 / CIP 107618 / JCM 11309 / KCTC 3954 / HTE831).